A 369-amino-acid chain; its full sequence is Phospho-N-acetylmuramoyl-pentapeptide-transferase (369 aa).

Transmembrane regions (helical) follow at residues 2-22 (IPLL…TQLF), 55-75 (AVVI…SWWI), 82-102 (PSVS…VGFL), 120-140 (AKLI…INFA), 163-183 (LAFA…NLII), 196-216 (LDGL…LIGI), 240-260 (PLDL…FLWW), 267-287 (IFMG…FAIL), 292-312 (ILLA…ILQV), and 349-369 (ILGG…WVVF).

This sequence belongs to the glycosyltransferase 4 family. MraY subfamily. It depends on Mg(2+) as a cofactor.

The protein resides in the cell membrane. The enzyme catalyses UDP-N-acetyl-alpha-D-muramoyl-L-alanyl-gamma-D-glutamyl-meso-2,6-diaminopimeloyl-D-alanyl-D-alanine + di-trans,octa-cis-undecaprenyl phosphate = di-trans,octa-cis-undecaprenyl diphospho-N-acetyl-alpha-D-muramoyl-L-alanyl-D-glutamyl-meso-2,6-diaminopimeloyl-D-alanyl-D-alanine + UMP. It functions in the pathway cell wall biogenesis; peptidoglycan biosynthesis. Its function is as follows. Catalyzes the initial step of the lipid cycle reactions in the biosynthesis of the cell wall peptidoglycan: transfers peptidoglycan precursor phospho-MurNAc-pentapeptide from UDP-MurNAc-pentapeptide onto the lipid carrier undecaprenyl phosphate, yielding undecaprenyl-pyrophosphoryl-MurNAc-pentapeptide, known as lipid I. The sequence is that of Phospho-N-acetylmuramoyl-pentapeptide-transferase from Renibacterium salmoninarum (strain ATCC 33209 / DSM 20767 / JCM 11484 / NBRC 15589 / NCIMB 2235).